A 302-amino-acid polypeptide reads, in one-letter code: UDP-N-acetylenolpyruvoylglucosamine reductase (302 aa).

An FAD-binding PCMH-type domain is found at 29–192; that stretch reads KVGGPVDLLA…VAVTLQLSED (164 aa). Arginine 172 is an active-site residue. Serine 221 functions as the Proton donor in the catalytic mechanism. Residue glutamate 291 is part of the active site.

The protein belongs to the MurB family. Requires FAD as cofactor.

The protein localises to the cytoplasm. It carries out the reaction UDP-N-acetyl-alpha-D-muramate + NADP(+) = UDP-N-acetyl-3-O-(1-carboxyvinyl)-alpha-D-glucosamine + NADPH + H(+). The protein operates within cell wall biogenesis; peptidoglycan biosynthesis. Functionally, cell wall formation. This is UDP-N-acetylenolpyruvoylglucosamine reductase from Trichlorobacter lovleyi (strain ATCC BAA-1151 / DSM 17278 / SZ) (Geobacter lovleyi).